The following is a 152-amino-acid chain: Nucleoside diphosphate kinase (152 aa).

ATP-binding residues include lysine 11, phenylalanine 59, arginine 87, threonine 93, arginine 104, and asparagine 114. Histidine 117 functions as the Pros-phosphohistidine intermediate in the catalytic mechanism.

This sequence belongs to the NDK family. As to quaternary structure, homotetramer. Mg(2+) serves as cofactor.

The protein resides in the cytoplasm. It catalyses the reaction a 2'-deoxyribonucleoside 5'-diphosphate + ATP = a 2'-deoxyribonucleoside 5'-triphosphate + ADP. It carries out the reaction a ribonucleoside 5'-diphosphate + ATP = a ribonucleoside 5'-triphosphate + ADP. Functionally, major role in the synthesis of nucleoside triphosphates other than ATP. The ATP gamma phosphate is transferred to the NDP beta phosphate via a ping-pong mechanism, using a phosphorylated active-site intermediate. The polypeptide is Nucleoside diphosphate kinase (Prochlorococcus marinus (strain AS9601)).